A 256-amino-acid polypeptide reads, in one-letter code: Protein FixA (256 aa).

The protein belongs to the ETF beta-subunit/FixA family. As to quaternary structure, heterodimer of FixA and FixB.

The protein operates within amine and polyamine metabolism; carnitine metabolism. Its function is as follows. Required for anaerobic carnitine reduction. May bring reductant to CaiA. This Salmonella dublin (strain CT_02021853) protein is Protein FixA.